The primary structure comprises 250 residues: Proteasome subunit alpha type-4 (250 aa).

It belongs to the peptidase T1A family. In terms of assembly, the 26S proteasome consists of a 20S proteasome core and two 19S regulatory subunits. The 20S proteasome core is composed of 28 subunits that are arranged in four stacked rings, resulting in a barrel-shaped structure. The two end rings are each formed by seven alpha subunits, and the two central rings are each formed by seven beta subunits. The catalytic chamber with the active sites is on the inside of the barrel.

It localises to the cytoplasm. Its subcellular location is the nucleus. In terms of biological role, the proteasome is a multicatalytic proteinase complex which is characterized by its ability to cleave peptides with Arg, Phe, Tyr, Leu, and Glu adjacent to the leaving group at neutral or slightly basic pH. The proteasome has an ATP-dependent proteolytic activity. In Dictyostelium discoideum (Social amoeba), this protein is Proteasome subunit alpha type-4 (psmA4).